We begin with the raw amino-acid sequence, 272 residues long: HMP-PP phosphatase (272 aa).

D8 acts as the Nucleophile in catalysis. D8, D10, and D212 together coordinate Mg(2+).

This sequence belongs to the HAD-like hydrolase superfamily. Cof family. The cofactor is Mg(2+).

The catalysed reaction is 4-amino-2-methyl-5-(diphosphooxymethyl)pyrimidine + H2O = 4-amino-2-methyl-5-(phosphooxymethyl)pyrimidine + phosphate + H(+). In terms of biological role, catalyzes the hydrolysis of 4-amino-2-methyl-5-hydroxymethylpyrimidine pyrophosphate (HMP-PP) to 4-amino-2-methyl-5-hydroxymethylpyrimidine phosphate (HMP-P). The chain is HMP-PP phosphatase from Shigella flexneri serotype 5b (strain 8401).